The following is a 213-amino-acid chain: Ribosomal RNA small subunit methyltransferase G (213 aa).

S-adenosyl-L-methionine-binding positions include glycine 81, leucine 86, 132 to 133, and arginine 147; that span reads VE.

This sequence belongs to the methyltransferase superfamily. RNA methyltransferase RsmG family.

Its subcellular location is the cytoplasm. The catalysed reaction is guanosine(527) in 16S rRNA + S-adenosyl-L-methionine = N(7)-methylguanosine(527) in 16S rRNA + S-adenosyl-L-homocysteine. Specifically methylates the N7 position of guanine in position 527 of 16S rRNA. This is Ribosomal RNA small subunit methyltransferase G from Mannheimia succiniciproducens (strain KCTC 0769BP / MBEL55E).